The primary structure comprises 311 residues: Methionyl-tRNA formyltransferase (311 aa).

112–115 (SLLP) provides a ligand contact to (6S)-5,6,7,8-tetrahydrofolate.

The protein belongs to the Fmt family.

It carries out the reaction L-methionyl-tRNA(fMet) + (6R)-10-formyltetrahydrofolate = N-formyl-L-methionyl-tRNA(fMet) + (6S)-5,6,7,8-tetrahydrofolate + H(+). Functionally, attaches a formyl group to the free amino group of methionyl-tRNA(fMet). The formyl group appears to play a dual role in the initiator identity of N-formylmethionyl-tRNA by promoting its recognition by IF2 and preventing the misappropriation of this tRNA by the elongation apparatus. This is Methionyl-tRNA formyltransferase from Sinorhizobium fredii (strain NBRC 101917 / NGR234).